The following is an 866-amino-acid chain: Potassium voltage-gated channel subfamily KQT member 3 (866 aa).

The tract at residues 1 to 42 (MGLKARRPAGAAGGGGDGGGGGGGAANPAGGDAAAAGDEERK) is disordered. At 1–120 (MGLKARRPAG…IYDALERPRG (120 aa)) the chain is on the cytoplasmic side. Positions 11–25 (AAGGGGDGGGGGGGA) are enriched in gly residues. Residues 26–36 (ANPAGGDAAAA) are compositionally biased toward low complexity. Residue T81 is modified to Phosphothreonine. The chain crosses the membrane as a helical span at residues 121–143 (WALLYHALVFLIVLGCLILAVLT). The Extracellular portion of the chain corresponds to 144-153 (TFREYETVSG). Residues 154-175 (DWLLLLETFAIFIFGAEFALRI) traverse the membrane as a helical segment. The Cytoplasmic portion of the chain corresponds to 176–193 (WAAGCCCRYKGWRGRLKF). Residues 194–213 (ARKPLCMLDIFVLIASVPVV) form a helical membrane-spanning segment. Residues 214-225 (AVGNQGNVLATS) lie on the Extracellular side of the membrane. A helical; Voltage-sensor membrane pass occupies residues 226 to 244 (LRSLRFLQILRMLRMDRRG). R243 serves as a coordination point for a 1,2-diacyl-sn-glycero-3-phospho-(1D-myo-inositol-4,5-bisphosphate). Residues 245 to 256 (GTWKLLGSAICA) lie on the Cytoplasmic side of the membrane. Residues 257–282 (HSKELITAWYIGFLTLILSSFLVYLV) form a helical membrane-spanning segment. Position 259 (K259) interacts with a 1,2-diacyl-sn-glycero-3-phospho-(1D-myo-inositol-4,5-bisphosphate). The Extracellular segment spans residues 283–302 (EKDVPEVDAQGEEMKEEFET). The pore-forming intramembrane region spans 303 to 315 (YADALWWGLITLA). Positions 316–321 (TIGYGD) match the Selectivity filter motif. Residues 316–326 (TIGYGDKTPKT) are Extracellular-facing. Residues 327 to 353 (WEGRLIAATFSLIGVSFFALPAGILGS) form a helical membrane-spanning segment. The Cytoplasmic segment spans residues 354 to 866 (GLALKVQEQH…SIWTPSGKPT (513 aa)). Positions 356–537 (ALKVQEQHRQ…RLYKKKFKET (182 aa)) are mediates interaction with calmodulin. An a 1,2-diacyl-sn-glycero-3-phospho-(1D-myo-inositol-4,5-bisphosphate)-binding site is contributed by K366. Disordered regions lie at residues 574–617 (PGPP…EDQS), 656–676 (GFSPSKGASSPAEAEQKEDRR), and 757–866 (QVEL…GKPT). Residues 837–866 (EPFTPSGSLPLSSTGDGISDSIWTPSGKPT) are compositionally biased toward polar residues.

Belongs to the potassium channel family. KQT (TC 1.A.1.15) subfamily. Kv7.3/KCNQ3 sub-subfamily. As to quaternary structure, heterotetramer with KCNQ2; forms heterotetrameric native M-channel responsible for the M-current. Interacts with calmodulin; the interaction is calcium-independent, constitutive and participates in the proper assembly of a functional M-channel. Heteromultimer with KCNQ5. May associate with KCNE2. Interacts with IQCJ-SCHIP1. Interacts (via the pore module) with SLC5A3/SMIT1; forms a coregulatory complex that alters ion selectivity, voltage dependence and gating kinetics of the channel. Post-translationally, KCNQ2/KCNQ3 are ubiquitinated by NEDD4L. Ubiquitination leads to protein degradation. Degradation induced by NEDD4L is inhibited by USP36.

The protein localises to the cell membrane. It catalyses the reaction K(+)(in) = K(+)(out). The catalysed reaction is Rb(+)(in) = Rb(+)(out). The enzyme catalyses Cs(+)(in) = Cs(+)(out). It carries out the reaction Na(+)(in) = Na(+)(out). Phosphatidylinositol-4,5-bisphosphate (PIP2) potentiates the activation of KCNQ channels by enhancing the electro-mechanical coupling of the voltage-sensing domain (VSD) and the pore-forming domain (PD). In the closed state of the channel, PIP2 is anchored at the S2-S3 loop; upon channel activation, PIP2 interacts with the S4-S5 linker and is involved in channel gating. Calcium suppresses KCNQ2-KCNQ3 channel currents, with calcium-bound calmodulin inducing a change in channel configuration which leads to the reduction of channel affinity for PIP2 and subsequent current suppression. Pore-forming subunit of the voltage-gated potassium (Kv) M-channel which is responsible for the M-current, a key controller of neuronal excitability. M-channel is composed of pore-forming subunits KCNQ2 and KCNQ3 assembled as heterotetramers. The native M-current has a slowly activating and deactivating potassium conductance which plays a critical role in determining the subthreshold electrical excitability of neurons as well as the responsiveness to synaptic inputs. M-channel is selectively permeable in vitro to other cations besides potassium, in decreasing order of affinity K(+) &gt; Rb(+) &gt; Cs(+) &gt; Na(+). M-channel association with SLC5A3/SMIT1 alters channel ion selectivity, increasing Na(+) and Cs(+) permeation relative to K(+). Suppressed by activation of M1 muscarinic acetylcholine receptors. KCNQ3 also associates with KCNQ5 to form a functional channel in vitro and may also contribute to the M-current in brain. In Bos taurus (Bovine), this protein is Potassium voltage-gated channel subfamily KQT member 3.